Here is a 331-residue protein sequence, read N- to C-terminus: Glucokinase (331 aa).

16–21 (GDIGGT) contributes to the ATP binding site.

It belongs to the bacterial glucokinase family.

The protein resides in the cytoplasm. The enzyme catalyses D-glucose + ATP = D-glucose 6-phosphate + ADP + H(+). The chain is Glucokinase from Pseudomonas aeruginosa (strain LESB58).